Here is a 92-residue protein sequence, read N- to C-terminus: Actobindin-A (92 aa).

2 disordered regions span residues 1 to 33 (MSAPNPLLAEINKGADLKHTETQDKSAPKIGSD) and 54 to 92 (LKHAETDDKSAPKINENTTIKPNNHSALLGEIKAKAADS). 2 WH2 domains span residues 3–20 (APNPLLAEINKGADLKHT) and 40–57 (DHASLLSEVEQGAKLKHA). Composition is skewed to basic and acidic residues over residues 13–33 (KGADLKHTETQDKSAPKIGSD) and 54–64 (LKHAETDDKSA). Residues 68–79 (NENTTIKPNNHS) are compositionally biased toward polar residues.

In terms of assembly, monomer.

Functionally, is able to bind two actin monomers at high concentrations of G-actin. Inhibits actin polymerization by sequestering G-actin and stabilizing actin dimers. The protein is Actobindin-A (abnA) of Dictyostelium discoideum (Social amoeba).